A 240-amino-acid polypeptide reads, in one-letter code: Uridylate kinase (240 aa).

Lysine 13 to glycine 16 provides a ligand contact to ATP. The segment at glycine 21 to glycine 26 is involved in allosteric activation by GTP. Glycine 55 contributes to the UMP binding site. Positions 56 and 60 each coordinate ATP. UMP-binding positions include aspartate 75 and threonine 136–threonine 143. Residues threonine 163, glutamine 164, tyrosine 169, and aspartate 172 each contribute to the ATP site.

It belongs to the UMP kinase family. In terms of assembly, homohexamer.

Its subcellular location is the cytoplasm. The catalysed reaction is UMP + ATP = UDP + ADP. It participates in pyrimidine metabolism; CTP biosynthesis via de novo pathway; UDP from UMP (UMPK route): step 1/1. Its activity is regulated as follows. Allosterically activated by GTP. Inhibited by UTP. Catalyzes the reversible phosphorylation of UMP to UDP. The protein is Uridylate kinase of Rhizobium meliloti (strain 1021) (Ensifer meliloti).